The following is a 312-amino-acid chain: Glycine--tRNA ligase alpha subunit (312 aa).

Belongs to the class-II aminoacyl-tRNA synthetase family. As to quaternary structure, tetramer of two alpha and two beta subunits.

Its subcellular location is the cytoplasm. It carries out the reaction tRNA(Gly) + glycine + ATP = glycyl-tRNA(Gly) + AMP + diphosphate. The sequence is that of Glycine--tRNA ligase alpha subunit from Thiobacillus denitrificans (strain ATCC 25259 / T1).